The following is a 372-amino-acid chain: GDP-mannose transporter GONST3 (372 aa).

Helical transmembrane passes span 33 to 53, 60 to 80, 92 to 112, 125 to 145, 155 to 175, 177 to 197, 209 to 229, 251 to 271, 280 to 300, and 303 to 323; these read ASVY…SIIN, FPYP…GVLL, LNLL…LSLF, TFIV…TLFL, WGSL…DYQF, IAAY…FVYI, WGLV…ELLI, VVLP…FGFS, GFTV…LMVW, and HSTF…VMYQ. The segment at 331–372 is disordered; the sequence is NATQEAKPQEQDEEQEKLLEMQENKESNSVDIKETLKSEEKL. The span at 346–372 shows a compositional bias: basic and acidic residues; the sequence is EKLLEMQENKESNSVDIKETLKSEEKL.

Belongs to the nucleotide-sugar transporter family. GDP-Mannose:GMP antiporter (GMA) (TC 2.A.7.13) subfamily. In terms of tissue distribution, expressed in rosette leaves, stems, flowers and siliques.

It is found in the golgi apparatus membrane. Its function is as follows. GDP-mannose transporter that may be involved in the import of GDP-mannose from the cytoplasm into the Golgi lumen. The polypeptide is GDP-mannose transporter GONST3 (Arabidopsis thaliana (Mouse-ear cress)).